We begin with the raw amino-acid sequence, 1035 residues long: Glycine dehydrogenase (decarboxylating), mitochondrial (1035 aa).

Residues Met-1–Ser-64 constitute a mitochondrion transit peptide. The residue at position 771 (Lys-771) is an N6-(pyridoxal phosphate)lysine.

The protein belongs to the GcvP family. As to quaternary structure, homodimer. The glycine cleavage system is composed of four proteins: P, T, L and H. It depends on pyridoxal 5'-phosphate as a cofactor.

The protein localises to the mitochondrion. The catalysed reaction is N(6)-[(R)-lipoyl]-L-lysyl-[glycine-cleavage complex H protein] + glycine + H(+) = N(6)-[(R)-S(8)-aminomethyldihydrolipoyl]-L-lysyl-[glycine-cleavage complex H protein] + CO2. Its function is as follows. The glycine cleavage system catalyzes the degradation of glycine. The P protein binds the alpha-amino group of glycine through its pyridoxal phosphate cofactor; CO(2) is released and the remaining methylamine moiety is then transferred to the lipoamide cofactor of the H protein. The sequence is that of Glycine dehydrogenase (decarboxylating), mitochondrial (GDCSP) from Solanum tuberosum (Potato).